A 614-amino-acid polypeptide reads, in one-letter code: Probable glutamate--tRNA ligase, cytoplasmic (614 aa).

Residue 130 to 132 (RFA) coordinates L-glutamate. The short motif at 135–144 (PSGCLHIGHL) is the 'HIGH' region element. Residue histidine 140 participates in ATP binding. L-glutamate-binding positions include aspartate 166, 303–307 (YDFVC), and arginine 321. Residues glutamate 324 and 359–363 (VLSKR) contribute to the ATP site. Positions 359–363 (VLSKR) match the 'KMSKS' region motif.

The protein belongs to the class-I aminoacyl-tRNA synthetase family. Glutamate--tRNA ligase type 2 subfamily.

The protein resides in the cytoplasm. The catalysed reaction is tRNA(Glu) + L-glutamate + ATP = L-glutamyl-tRNA(Glu) + AMP + diphosphate. This is Probable glutamate--tRNA ligase, cytoplasmic from Vairimorpha ceranae (strain BRL01) (Microsporidian parasite).